Consider the following 181-residue polypeptide: Peptide deformylase (181 aa).

Positions 99 and 141 each coordinate Fe cation. Glu142 is a catalytic residue. His145 contributes to the Fe cation binding site.

It belongs to the polypeptide deformylase family. Requires Fe(2+) as cofactor.

It catalyses the reaction N-terminal N-formyl-L-methionyl-[peptide] + H2O = N-terminal L-methionyl-[peptide] + formate. Removes the formyl group from the N-terminal Met of newly synthesized proteins. Requires at least a dipeptide for an efficient rate of reaction. N-terminal L-methionine is a prerequisite for activity but the enzyme has broad specificity at other positions. The chain is Peptide deformylase from Chlamydia muridarum (strain MoPn / Nigg).